Reading from the N-terminus, the 233-residue chain is Large ribosomal subunit protein uL22m (233 aa).

It belongs to the universal ribosomal protein uL22 family. In terms of assembly, component of the mitochondrial ribosome large subunit (39S) which comprises a 16S rRNA and about 50 distinct proteins.

The protein localises to the mitochondrion. This Drosophila pseudoobscura pseudoobscura (Fruit fly) protein is Large ribosomal subunit protein uL22m (mRpL22).